Here is an 81-residue protein sequence, read N- to C-terminus: Adipogenin (81 aa).

Residues 16–36 (FLASWLCLPVGLLLFLLIVWL) traverse the membrane as a helical segment.

The protein belongs to the adipogenin family.

The protein localises to the membrane. It localises to the nucleus. Plays a role in stimulating adipocyte differentiation and development. This Sus scrofa (Pig) protein is Adipogenin.